Reading from the N-terminus, the 420-residue chain is Gamma-glutamyl phosphate reductase (420 aa).

Belongs to the gamma-glutamyl phosphate reductase family.

The protein resides in the cytoplasm. It carries out the reaction L-glutamate 5-semialdehyde + phosphate + NADP(+) = L-glutamyl 5-phosphate + NADPH + H(+). The protein operates within amino-acid biosynthesis; L-proline biosynthesis; L-glutamate 5-semialdehyde from L-glutamate: step 2/2. Functionally, catalyzes the NADPH-dependent reduction of L-glutamate 5-phosphate into L-glutamate 5-semialdehyde and phosphate. The product spontaneously undergoes cyclization to form 1-pyrroline-5-carboxylate. The sequence is that of Gamma-glutamyl phosphate reductase from Alkalilimnicola ehrlichii (strain ATCC BAA-1101 / DSM 17681 / MLHE-1).